The chain runs to 124 residues: uncharacterized protein (124 aa).

It is found in the plastid. The protein localises to the chloroplast. This is an uncharacterized protein from Chlamydomonas reinhardtii (Chlamydomonas smithii).